The following is a 1158-amino-acid chain: Voltage-gated inwardly rectifying potassium channel KCNH2 (1158 aa).

The Cytoplasmic segment spans residues 1–402; that stretch reads MPVRRGHVAP…RIHRWTILHY (402 aa). Residues 17-88 form the PAS domain; it reads TIIRKFEGQS…AAQIAQALLG (72 aa). The 53-residue stretch at 92 to 144 folds into the PAC domain; the sequence is RKVEIAFYRKDGSCFLCLVDVVPVKNEDGAVIMFILNFEVVMEKDMVGSPTHD. The tract at residues 232-314 is disordered; that stretch reads RALVGSSSPP…GAMHPLRGGL (83 aa). Ser239 bears the Phosphoserine mark. Positions 258 to 269 are enriched in polar residues; that stretch reads PDASGSSCSLAR. Residues Ser283, Ser284, Ser319, and Ser350 each carry the phosphoserine modification. The helical transmembrane segment at 403–423 threads the bilayer; it reads SPFKAVWDWLILLLVIYTAVF. The Extracellular portion of the chain corresponds to 424-449; the sequence is TPYSAAFLLKETEEGPPAPDCGYACQ. The helical transmembrane segment at 450–470 threads the bilayer; the sequence is PLAVVDFIVDIMFIVDILINF. At 471 to 494 the chain is on the cytoplasmic side; the sequence is RTTYVNANEEVVSHPGRIAVHYFK. A helical transmembrane segment spans residues 495 to 515; it reads GWFLIDMVAAIPFDLLIFGSG. Residues 516–519 lie on the Extracellular side of the membrane; sequence SEEL. Residues 520-540 form a helical; Voltage-sensor membrane-spanning segment; that stretch reads IGLLKTARLLRLVRVARKLDR. The Cytoplasmic portion of the chain corresponds to 541 to 546; it reads YSEYGA. A helical membrane pass occupies residues 547–567; it reads AVLFLLMCTFALIAHWLACIW. Residues 568–610 lie on the Extracellular side of the membrane; sequence YAIGNMEQPHMDSRIGWLHNLGDQIGKPYNSSGLGGPSIKDKY. The N-linked (GlcNAc...) asparagine glycan is linked to Asn597. An intramembrane region (pore-forming) is located at residues 611 to 631; the sequence is VTALYFTFSSLTSVGFGNVSP. Positions 623–628 match the Selectivity filter motif; it reads SVGFGN. At 632–637 the chain is on the extracellular side; it reads NTNSEK. The helical transmembrane segment at 638-658 threads the bilayer; the sequence is IFSICVMLIGSLMYASIFGNV. Residues 659–1158 lie on the Cytoplasmic side of the membrane; it reads SAIIQRLYSG…LHRHGSDPGS (500 aa). The cNMP-binding domain stretch occupies residues 741–841; that stretch reads PFRGATKGCL…IHRDDLLEVL (101 aa). The tract at residues 869–987 is disordered; the sequence is GSPGSAELEG…KSSDTCNPLS (119 aa). A phosphoserine mark is found at Ser870 and Ser873. The span at 882–891 shows a compositional bias: basic residues; the sequence is RQRKRKLSFR. Positions 910–926 are enriched in gly residues; the sequence is GRAGAGPSGRGRPGGPW. Low complexity predominate over residues 927–938; that stretch reads GESPSSGPSSPE. A compositionally biased stretch (pro residues) spans 959-969; sequence SPRPPGEPPGG. Omega-N-methylarginine is present on Arg1013. The stretch at 1034 to 1061 forms a coiled coil; sequence RGDVEGRLDALQRQLNRLETRLSADMAT. A disordered region spans residues 1116–1158; it reads FEELPPGAPELPQDGPPRRLSLPGQLGALTSQPLHRHGSDPGS. Position 1136 is a phosphoserine (Ser1136).

It belongs to the potassium channel family. H (Eag) (TC 1.A.1.20) subfamily. Kv11.1/KCNH2 sub-subfamily. In terms of assembly, the potassium channel is probably composed of a homo- or heterotetrameric complex of pore-forming alpha subunits that can associate with modulating beta subunits. Interacts with DNAJB12 and DNAJB14; chaperones DNAJB12 and DNAJB14 promote tetramerization. Heteromultimer with KCNH6/ERG2 and KCNH7/ERG3. Interacts with ALG10B. Forms a stable complex with KCNE1 or KCNE2, and that this heteromultimerization regulates Inward rectifier potassium channel activity. Interacts with CANX. The core-glycosylated, but not the fully glycosylated form interacts with RNF207. Interacts with NDFIP1 and NDFIP2; this interaction decreases the cell membrane expression by targeting KCNH2, through interaction with NEDD4L, for the degradation through the multivesicular bodies (MVBs)-lysosomal pathway. Phosphorylated on serine and threonine residues. Phosphorylation by PKA inhibits ion conduction. Highly expressed in left and right atria of the heart, in cortex and hippocampus; detected at intermediate levels in left and right ventricle, Purkinje fibers, cerebellum, thalamus and basal ganglia; detected at low levels in liver, spleen and kidney.

It is found in the cell membrane. It carries out the reaction K(+)(in) = K(+)(out). Pore-forming (alpha) subunit of voltage-gated inwardly rectifying potassium channel. Characterized by unusual gating kinetics by producing relatively small outward currents during membrane depolarization and large inward currents during subsequent repolarization which reflect a rapid inactivation during depolarization and quick recovery from inactivation but slow deactivation (closing) during repolarization. Channel properties are modulated by cAMP and subunit assembly. Forms a stable complex with KCNE1 or KCNE2, and that this heteromultimerization regulates inward rectifier potassium channel activity. This is Voltage-gated inwardly rectifying potassium channel KCNH2 from Canis lupus familiaris (Dog).